A 196-amino-acid chain; its full sequence is MILKNAIALTGGIGTGKSTTLKILESQGYKILDADKIAHQLLQEHRLEIAQRFGSDILEKDILNRKKLGAIVFQNANELKWLEDFLHPLIRECMLKKACELEKNHQAYFLDIPLFFEVGGKKRYPVSRVVLIYAPRALQIERLLERDKLKEAEILQRLACQMDIEQKRAMSDYIIDNSSSLKDLNKQVERFLKTLL.

The region spanning Ala6–Leu196 is the DPCK domain. Gly14–Thr19 is an ATP binding site.

The protein belongs to the CoaE family.

The protein resides in the cytoplasm. The enzyme catalyses 3'-dephospho-CoA + ATP = ADP + CoA + H(+). Its pathway is cofactor biosynthesis; coenzyme A biosynthesis; CoA from (R)-pantothenate: step 5/5. Catalyzes the phosphorylation of the 3'-hydroxyl group of dephosphocoenzyme A to form coenzyme A. The protein is Dephospho-CoA kinase of Helicobacter pylori (strain J99 / ATCC 700824) (Campylobacter pylori J99).